Reading from the N-terminus, the 373-residue chain is CASP-like protein UU6 (373 aa).

Disordered regions lie at residues 1–100 (MGTL…GSEG) and 172–195 (TKET…PKKK). Residues 1 to 204 (MGTLTDPTVD…KHRLRKHLTA (204 aa)) are Cytoplasmic-facing. Residues 56–74 (KTNTGNAAESTASTENGET) are compositionally biased toward polar residues. A helical membrane pass occupies residues 205 to 225 (IGAYSFAFRFSETVLSLIAIV). Residues 226–253 (VMCSTRGSMRTDGVDFGTLKFNHFQAYR) lie on the Extracellular side of the membrane. The helical transmembrane segment at 254–274 (YLVAVNVIVFVYSTFQFIQLL) threads the bilayer. At 275–276 (YT) the chain is on the cytoplasmic side. A helical transmembrane segment spans residues 277 to 297 (VILGISFIPSIFISTWMTFGF). At 298–342 (DQLFLYLLLSASTSAATVANMSYTGEMGIQLCSRFDVGSFCSKAD) the chain is on the extracellular side. Asn-317 carries N-linked (GlcNAc...) asparagine glycosylation. A helical transmembrane segment spans residues 343–363 (VAVTMSFFAVLAMLSSTILAI). The Cytoplasmic segment spans residues 364–373 (YRIAVLLREY).

The protein belongs to the Casparian strip membrane proteins (CASP) family. Homodimer and heterodimers.

Its subcellular location is the cell membrane. In Physcomitrium patens (Spreading-leaved earth moss), this protein is CASP-like protein UU6.